The sequence spans 384 residues: Odorant receptor 46a, isoform B (384 aa).

Over 1-37 (MVTEDFYKYQVWYFQILGVWQLPTWAADHQRRFQSMR) the chain is Cytoplasmic. Residues 38-58 (FGFILVILFIMLLLFSFEMLN) traverse the membrane as a helical segment. Asparagine 59 carries an N-linked (GlcNAc...) asparagine glycan. At 59 to 65 (NISQVRE) the chain is on the extracellular side. A helical membrane pass occupies residues 66 to 86 (ILKVFFMFATEISCMAKLLHL). Residues 87–130 (KLKSRKLAGLVDAMLSPEFGVKSEQEMQMLELDRVAVVRMRNSY) are Cytoplasmic-facing. The helical transmembrane segment at 131 to 151 (GIMSLGAASLILIVPCFDNFG) threads the bilayer. Residues 152 to 165 (ELPLAMLEVCSIEG) lie on the Extracellular side of the membrane. Residues 166-186 (WICYWSQYLFHSICLLPTCVL) form a helical membrane-spanning segment. Residues 187-247 (NITYDSVAYS…YNRIVRFKDL (61 aa)) are Cytoplasmic-facing. Residues 248-268 (VELFIKGPGSVQLMCSVLVLV) form a helical membrane-spanning segment. The Extracellular segment spans residues 269 to 283 (SNLYDMSTMSIANGD). A helical membrane pass occupies residues 284 to 304 (AIFMLKTCIYQLVMLWQIFII). The Cytoplasmic segment spans residues 305–348 (CYASNEVTVQSSRLCHSIYSSQWTGWNRANRRIVLLMMQRFNSP). Residues 349-369 (MLLSTFNPTFAFSLEAFGSIV) form a helical membrane-spanning segment. A glycan (N-linked (GlcNAc...) asparagine) is linked at asparagine 370. Residues 370 to 384 (NCSYSYFALLKRVNS) are Extracellular-facing.

It belongs to the insect chemoreceptor superfamily. Heteromeric odorant receptor channel (TC 1.A.69) family. Or2a subfamily. In terms of assembly, interacts with Orco. Complexes exist early in the endomembrane system in olfactory sensory neurons (OSNs), coupling these complexes to the conserved ciliary trafficking pathway. Isoform B is expressed in the antenna.

It is found in the cell membrane. Its function is as follows. Odorant receptor which mediates acceptance or avoidance behavior, depending on its substrates. The odorant receptor repertoire encodes a large collection of odor stimuli that vary widely in identity, intensity, and duration. May form a complex with Orco to form odorant-sensing units, providing sensitive and prolonged odorant signaling and calcium permeability. This chain is Odorant receptor 46a, isoform B (Or46a), found in Drosophila melanogaster (Fruit fly).